The sequence spans 178 residues: Small ribosomal subunit protein uS4 (178 aa).

Residues 104 to 166 enclose the S4 RNA-binding domain; that stretch reads RRLQTIVYRK…PNSPMASENH (63 aa). Residues 158–178 are disordered; that stretch reads NSPMASENHPERTAAVSEENQ.

It belongs to the universal ribosomal protein uS4 family. As to quaternary structure, part of the 30S ribosomal subunit. Contacts protein S5. The interaction surface between S4 and S5 is involved in control of translational fidelity.

One of the primary rRNA binding proteins, it binds directly to 16S rRNA where it nucleates assembly of the body of the 30S subunit. Functionally, with S5 and S12 plays an important role in translational accuracy. The chain is Small ribosomal subunit protein uS4 from Methanococcus maripaludis (strain C6 / ATCC BAA-1332).